A 221-amino-acid polypeptide reads, in one-letter code: UPF0502 protein PLES_16071 (221 aa).

This sequence belongs to the UPF0502 family.

The protein is UPF0502 protein PLES_16071 of Pseudomonas aeruginosa (strain LESB58).